The following is a 576-amino-acid chain: Dihydroxy-acid dehydratase (576 aa).

Cysteine 56 provides a ligand contact to [2Fe-2S] cluster. Aspartate 88 contributes to the Mg(2+) binding site. Residue cysteine 129 coordinates [2Fe-2S] cluster. 2 residues coordinate Mg(2+): aspartate 130 and lysine 131. Lysine 131 carries the post-translational modification N6-carboxylysine. Residue cysteine 201 participates in [2Fe-2S] cluster binding. Glutamate 453 provides a ligand contact to Mg(2+). The active-site Proton acceptor is the serine 479.

It belongs to the IlvD/Edd family. In terms of assembly, homodimer. [2Fe-2S] cluster serves as cofactor. The cofactor is Mg(2+).

It catalyses the reaction (2R)-2,3-dihydroxy-3-methylbutanoate = 3-methyl-2-oxobutanoate + H2O. It carries out the reaction (2R,3R)-2,3-dihydroxy-3-methylpentanoate = (S)-3-methyl-2-oxopentanoate + H2O. Its pathway is amino-acid biosynthesis; L-isoleucine biosynthesis; L-isoleucine from 2-oxobutanoate: step 3/4. The protein operates within amino-acid biosynthesis; L-valine biosynthesis; L-valine from pyruvate: step 3/4. Functionally, functions in the biosynthesis of branched-chain amino acids. Catalyzes the dehydration of (2R,3R)-2,3-dihydroxy-3-methylpentanoate (2,3-dihydroxy-3-methylvalerate) into 2-oxo-3-methylpentanoate (2-oxo-3-methylvalerate) and of (2R)-2,3-dihydroxy-3-methylbutanoate (2,3-dihydroxyisovalerate) into 2-oxo-3-methylbutanoate (2-oxoisovalerate), the penultimate precursor to L-isoleucine and L-valine, respectively. The sequence is that of Dihydroxy-acid dehydratase from Parvibaculum lavamentivorans (strain DS-1 / DSM 13023 / NCIMB 13966).